The following is a 222-amino-acid chain: MKLSTVLCCYLLLLGLFAPEIISDSPPLQDVCPMAPQGERKLFMNGFFCKSPSTIMASDFKTLLLNHAGDLDNMVRSSANIITATEFPGLNTLGISMARTDIAVSGAVLPHSHPRASEMMFVHSGSVVAGFFDTKGKLFQKTLAEGDVFIFPRGLVHFIMNYGFGLATTFSVLNSQNPGVVGITHAMFAPDSEVAEGLMARMLSFRDMGMDDSSSVDSPWFY.

A signal peptide spans Met1 to Ser23. Cys32 and Cys49 are disulfide-bonded. The region spanning Asp72–Ala195 is the Cupin type-1 domain. Residues His111, His113, Glu118, and His157 each contribute to the Mn(2+) site.

The protein belongs to the germin family. As to quaternary structure, oligomer (believed to be a pentamer but probably hexamer).

It localises to the secreted. The protein resides in the extracellular space. The protein localises to the apoplast. Its function is as follows. May play a role in plant defense. Probably has no oxalate oxidase activity even if the active site is conserved. The chain is Germin-like protein 11-1 from Oryza sativa subsp. japonica (Rice).